Reading from the N-terminus, the 82-residue chain is Large ribosomal subunit protein uL23 (82 aa).

Belongs to the universal ribosomal protein uL23 family. As to quaternary structure, part of the 50S ribosomal subunit. Contacts protein L29.

Binds to 23S rRNA. One of the proteins that surrounds the polypeptide exit tunnel on the outside of the ribosome. The chain is Large ribosomal subunit protein uL23 from Methanosarcina barkeri (strain Fusaro / DSM 804).